A 157-amino-acid chain; its full sequence is Protein NrdI (157 aa).

Belongs to the NrdI family.

Functionally, probably involved in ribonucleotide reductase function. In Mycoplasma capricolum subsp. capricolum (strain California kid / ATCC 27343 / NCTC 10154), this protein is Protein NrdI.